A 687-amino-acid chain; its full sequence is Probable intron-encoded endonuclease aI3 (687 aa).

The segment at 1-374 is COX1 exons 1 to 3 encoded; sequence MKQMSYVTRW…NASMDVAFHD (374 aa). Helical transmembrane passes span 19–39, 69–89, 103–123, 152–172, 188–208, 240–260, 273–293, 315–335, 341–361, and 376–396; these read IGMTYLGFGMLSAMMGTGMSV, LLMMFFFIMPVWMGAFGNFFL, LNNISFWCLPPALVCMVCSVL, AMFAMHLTSMSSLLGAMNFMV, PLFAWAMFLTAMLLLLSLPVL, LFWFFGHPEVYILMMPGFGVM, FGEMGMLYAMGSIGFLGFLVW, MVIAVPTGIKIFSWLATIYGG, VPMLFALGFLFLFTMGGLTGV, and IFIYYVSFFLYTLYNMYNNYT. The interval 375–687 is COX1 intron 3 encoded; it reads RIFIYYVSFF…KKESLMKFLK (313 aa).

In the C-terminal section; belongs to the LAGLIDADG endonuclease family. This sequence in the N-terminal section; belongs to the heme-copper respiratory oxidase family. The mature protein may arise from proteolytic cleavage of an in-frame translation of COX1 exons 1 to 3 plus intron 3, containing the aI3 open reading frame.

It localises to the mitochondrion. It is found in the membrane. Its function is as follows. Mitochondrial DNA endonuclease involved in intron homing. The chain is Probable intron-encoded endonuclease aI3 (aI3) from Debaryomyces hansenii (strain ATCC 36239 / CBS 767 / BCRC 21394 / JCM 1990 / NBRC 0083 / IGC 2968) (Yeast).